Here is a 2513-residue protein sequence, read N- to C-terminus: Probable polyketide synthase 7 (2513 aa).

Positions 11–441 (EKGVAIVGIG…GSNCCLLISE (431 aa)) constitute a Ketosynthase family 3 (KS3) domain. Residues Cys-181, His-323, and His-362 each act as for beta-ketoacyl synthase activity in the active site. The tract at residues 632–665 (GVNPSFILGHSLGEISASYCSGMIDLDTFCYTVY) is acyl/malonyl transferase. The active-site For acyl/malonyl transferase activity is Ser-642. The segment at 922–1044 (IDHLGISNSF…SNFQLLDHGN (123 aa)) is N-terminal hotdog fold. The PKS/mFAS DH domain occupies 922–1206 (IDHLGISNSF…CKSLIPIKDS (285 aa)). The active-site Proton acceptor; for dehydratase activity is the His-956. Residues 1061-1206 (NLSKLTKNEL…CKSLIPIKDS (146 aa)) are C-terminal hotdog fold. Catalysis depends on Asp-1119, which acts as the Proton donor; for dehydratase activity. The Carrier domain occupies 2426–2503 (IGNKNIDELF…ISIKMILNSL (78 aa)). Ser-2463 carries the O-(pantetheine 4'-phosphoryl)serine modification.

Requires pantetheine 4'-phosphate as cofactor.

Functionally, probable polyketide synthase. The chain is Probable polyketide synthase 7 (pks7) from Dictyostelium discoideum (Social amoeba).